We begin with the raw amino-acid sequence, 157 residues long: SsrA-binding protein (157 aa).

Positions 133 to 157 (LHDKRESEKKRDWGREKGRLLRARG) are disordered. The span at 135 to 151 (DKRESEKKRDWGREKGR) shows a compositional bias: basic and acidic residues.

Belongs to the SmpB family.

The protein localises to the cytoplasm. In terms of biological role, required for rescue of stalled ribosomes mediated by trans-translation. Binds to transfer-messenger RNA (tmRNA), required for stable association of tmRNA with ribosomes. tmRNA and SmpB together mimic tRNA shape, replacing the anticodon stem-loop with SmpB. tmRNA is encoded by the ssrA gene; the 2 termini fold to resemble tRNA(Ala) and it encodes a 'tag peptide', a short internal open reading frame. During trans-translation Ala-aminoacylated tmRNA acts like a tRNA, entering the A-site of stalled ribosomes, displacing the stalled mRNA. The ribosome then switches to translate the ORF on the tmRNA; the nascent peptide is terminated with the 'tag peptide' encoded by the tmRNA and targeted for degradation. The ribosome is freed to recommence translation, which seems to be the essential function of trans-translation. This chain is SsrA-binding protein, found in Nitrobacter winogradskyi (strain ATCC 25391 / DSM 10237 / CIP 104748 / NCIMB 11846 / Nb-255).